A 401-amino-acid chain; its full sequence is Subtilisin-like protease 10 (401 aa).

The N-terminal stretch at 1–19 (MLFLKAVIAILSVLPAADA) is a signal peptide. Positions 20 to 116 (AAILNFENKQ…IEPDRMASAQ (97 aa)) are excised as a propeptide. The Inhibitor I9 domain occupies 35-112 (SYIVVLKNDI…QVDYIEPDRM (78 aa)). Residues 126 to 401 (SWGLGRISHQ…NRLLYNGSGQ (276 aa)) form the Peptidase S8 domain. Catalysis depends on charge relay system residues Asp158 and His189. An N-linked (GlcNAc...) asparagine glycan is attached at Asn250. Ser347 functions as the Charge relay system in the catalytic mechanism. Asn397 carries N-linked (GlcNAc...) asparagine glycosylation.

The protein belongs to the peptidase S8 family.

Its subcellular location is the secreted. Functionally, secreted subtilisin-like serine protease with keratinolytic activity that contributes to pathogenicity. In Arthroderma otae (strain ATCC MYA-4605 / CBS 113480) (Microsporum canis), this protein is Subtilisin-like protease 10 (SUB10).